Consider the following 298-residue polypeptide: MLYQQISQNKQRTVVLLVVFFALLALIGASAGYLLLDNYAMGLVLALVIGVIYATSMIFQSTSLVMSMNNAREVTEKEAPGFFHIVEDMAMVAQIPMPRVFIIEDPSLNAFATGSSPQNAAVAATTGLLEVMNREELEGVIGHEISHIRNYDIRISTIAVALASAVTVISSIGGRMLWYGGGSRRQRDDGDDDVLRIITLLLSLLSLLLAPLVASLIQLAISRQREYLADASSVELTRNPQGMIKALEKLQLSQPMKHPVDDASAALYINEPRKKRSFSSLFSTHPPIEERIERLKNM.

2 helical membrane-spanning segments follow: residues 14-34 and 39-59; these read VVLL…AGYL and YAMG…SMIF. Histidine 143 contributes to the Zn(2+) binding site. Residue glutamate 144 is part of the active site. Histidine 147 lines the Zn(2+) pocket. A run of 2 helical transmembrane segments spans residues 158-178 and 197-217; these read IAVA…RMLW and IITL…ASLI. Residue glutamate 226 participates in Zn(2+) binding.

The protein belongs to the peptidase M48B family. The cofactor is Zn(2+).

It is found in the cell membrane. The polypeptide is Protease HtpX homolog (Streptococcus pyogenes serotype M1).